The chain runs to 201 residues: Recombination protein RecR (201 aa).

The C4-type zinc finger occupies 57-74; sequence CRICGNITENSVNPCAIC. Residues 82–178 enclose the Toprim domain; that stretch reads STVFVVENSR…KVTRLAHGLA (97 aa).

Belongs to the RecR family.

Its function is as follows. May play a role in DNA repair. It seems to be involved in an RecBC-independent recombinational process of DNA repair. It may act with RecF and RecO. This Leuconostoc citreum (strain KM20) protein is Recombination protein RecR.